The following is a 571-amino-acid chain: E3 ubiquitin-protein ligase ipaH3 (571 aa).

The tract at residues 1-260 is interaction with target proteins; that stretch reads MSIMLPINNN…SQQTAQPDYH (260 aa). 9 LRR repeats span residues 58–81, 83–99, 100–119, 120–144, 146–159, 160–184, 186–202, 205–229, and 232–260; these read INQFSELQLNRLNLSSLPDNLPPQ, TVLEITQNALISLPELP, ASLEYLDACDNRLSTLPELP, ASLKHLDVDNNQLTMLPELPALLEY, NADNNQLTMLPELP, TSLEVLSVRNNQLTFLPELPESLEA, DVSTNLLESLPAVPVRN, SEETEIFFRCRENRITHIPENILSL, and TCTIILEDNPLSSRIRESLSQQTAQPDYH. The interval 269–278 is linker; it reads SDGQQNTLHR. Residues 279-571 form the NEL domain; the sequence is PLADAVTAWF…SENGSQLHHS (293 aa). The interval 279–571 is E3 ubiquitin-protein ligase catalytic domain; the sequence is PLADAVTAWF…SENGSQLHHS (293 aa). The active-site Glycyl thioester intermediate is the Cys-363.

The protein belongs to the LRR-containing bacterial E3 ligase family. In terms of processing, ubiquitinated in the presence of host E1 ubiquitin-activating enzyme, E2 ubiquitin-conjugating enzyme UBE2D3 and ubiquitin.

It is found in the secreted. Its subcellular location is the host cytoplasm. It carries out the reaction S-ubiquitinyl-[E2 ubiquitin-conjugating enzyme]-L-cysteine + [acceptor protein]-L-lysine = [E2 ubiquitin-conjugating enzyme]-L-cysteine + N(6)-ubiquitinyl-[acceptor protein]-L-lysine.. Its function is as follows. Effector proteins function to alter host cell physiology and promote bacterial survival in host tissues. This protein is an E3 ubiquitin ligase that interferes with host's ubiquitination pathway. Synthesizes a 'Lys-48'-linked ubiquitin chain, which requires non-covalent binding between ubiquitin and the host ubiquitin-conjugating enzyme UBE2D1. In Shigella flexneri, this protein is E3 ubiquitin-protein ligase ipaH3 (ipaH3).